The sequence spans 189 residues: dCTP deaminase (189 aa).

DCTP is bound by residues 112-117 (KSTYAR), 136-138 (TLE), Gln157, Tyr171, and Gln181. Glu138 serves as the catalytic Proton donor/acceptor.

Belongs to the dCTP deaminase family. Homotrimer.

It carries out the reaction dCTP + H2O + H(+) = dUTP + NH4(+). It functions in the pathway pyrimidine metabolism; dUMP biosynthesis; dUMP from dCTP (dUTP route): step 1/2. Catalyzes the deamination of dCTP to dUTP. This Burkholderia mallei (strain NCTC 10247) protein is dCTP deaminase.